The following is a 281-amino-acid chain: Acetyl-coenzyme A carboxylase carboxyl transferase subunit beta 2 (281 aa).

The CoA carboxyltransferase N-terminal domain maps to 26-281 (LLTRCPVCHE…TITQGGHQDV (256 aa)). The Zn(2+) site is built by Cys30, Cys33, Cys48, and Cys51. The C4-type zinc finger occupies 30–51 (CPVCHEDCYTQDLGEFKVCPHC).

Belongs to the AccD/PCCB family. In terms of assembly, acetyl-CoA carboxylase is a heterohexamer composed of biotin carboxyl carrier protein (AccB), biotin carboxylase (AccC) and two subunits each of ACCase subunit alpha (AccA) and ACCase subunit beta (AccD). Requires Zn(2+) as cofactor.

The protein localises to the cytoplasm. It catalyses the reaction N(6)-carboxybiotinyl-L-lysyl-[protein] + acetyl-CoA = N(6)-biotinyl-L-lysyl-[protein] + malonyl-CoA. It participates in lipid metabolism; malonyl-CoA biosynthesis; malonyl-CoA from acetyl-CoA: step 1/1. Component of the acetyl coenzyme A carboxylase (ACC) complex. Biotin carboxylase (BC) catalyzes the carboxylation of biotin on its carrier protein (BCCP) and then the CO(2) group is transferred by the transcarboxylase to acetyl-CoA to form malonyl-CoA. This Lactiplantibacillus plantarum (strain JDM1) (Lactobacillus plantarum) protein is Acetyl-coenzyme A carboxylase carboxyl transferase subunit beta 2.